The sequence spans 565 residues: Wee1-like protein kinase 2 (565 aa).

Basic and acidic residues-rich tracts occupy residues methionine 1–glutamine 12 and glutamate 26–alanine 52. 2 disordered regions span residues methionine 1–proline 142 and lysine 169–lysine 189. A Phosphoserine modification is found at serine 77. Residues lysine 173–lysine 175 carry the Nuclear localization signal motif. Basic and acidic residues predominate over residues arginine 178–lysine 189. In terms of domain architecture, Protein kinase spans phenylalanine 214 to leucine 492. ATP is bound by residues isoleucine 220–valine 228 and lysine 243. The short motif at lysine 317 to tyrosine 331 is the Nuclear export signal element. Catalysis depends on aspartate 341, which acts as the Proton acceptor. Positions 346 and 382 each coordinate Mg(2+). A coiled-coil region spans residues threonine 495–arginine 521. The interval glutamate 518–proline 565 is disordered. Composition is skewed to polar residues over residues arginine 521–valine 534 and alanine 553–proline 565.

Belongs to the protein kinase superfamily. Ser/Thr protein kinase family. WEE1 subfamily. Post-translationally, phosphorylation leads to increase its activity. In terms of tissue distribution, ovary-specific.

It localises to the nucleus. The enzyme catalyses L-tyrosyl-[protein] + ATP = O-phospho-L-tyrosyl-[protein] + ADP + H(+). Its function is as follows. Oocyte-specific protein tyrosine kinase that phosphorylates and inhibits CDK1 and acts as a key regulator of meiosis during both prophase I and metaphase II. Required to maintain meiotic arrest in oocytes during the germinal vesicle (GV) stage, a long period of quiescence at dictyate prophase I, by phosphorylating CDK1 at 'Tyr-15', leading to inhibit CDK1 activity and prevent meiotic reentry. Also required for metaphase II exit during egg activation by phosphorylating CDK1 at 'Tyr-15', to ensure exit from meiosis in oocytes and promote pronuclear formation. The protein is Wee1-like protein kinase 2 (WEE2) of Sus scrofa (Pig).